We begin with the raw amino-acid sequence, 261 residues long: uncharacterized protein (261 aa).

3 consecutive transmembrane segments (helical) span residues 15–35, 87–107, and 131–151; these read WYSV…IIVC, VYLI…IRNA, and LLLY…YFLI. Positions 234-246 are enriched in basic and acidic residues; it reads LEEKKAKRRQNAE. The tract at residues 234-261 is disordered; that stretch reads LEEKKAKRRQNAERRKKRREIAMEQREQ.

It localises to the membrane. This is an uncharacterized protein from Caenorhabditis elegans.